The sequence spans 268 residues: MSGSVIHSQSAVMVPAVYSAGQPASLPVAIDYPAALALRQMSMVHDELPKYLLAPEVSALLHYVPDLHRKMLLATLWNTGARINEALALTRGDFSLAPPYPFVQLATLKQRTEKAARTAGRMPAGQQTHRLVPLSDSWYVSQLQTMVAQLKIPMERRNRRTGRTEKARIWEVTDRTVRTWIGEAVAAAAADGVTFSVPVTPHTFRHSYAMHMLYAGIPLKVLQSLMGHKSISSTEVYTKVFALDVAARHRVQFAMPESDAVAMLKQLS.

Residues 47–250 (ELPKYLLAPE…FALDVAARHR (204 aa)) enclose the Tyr recombinase domain. Active-site residues include Arg-82, Lys-114, His-202, Arg-205, and His-228. The O-(3'-phospho-DNA)-tyrosine intermediate role is filled by Tyr-237.

The protein belongs to the 'phage' integrase family.

In terms of biological role, acts as a repressor of transcription and as a site-specific resolvase that cleaves at the RfsF site. This chain is Resolvase (resD), found in Escherichia coli (strain K12).